Consider the following 208-residue polypeptide: Pyridoxine/pyridoxamine 5'-phosphate oxidase (208 aa).

FMN contacts are provided by residues 55-60 (RMVLLK), 70-71 (YT), K77, and Q99. Position 60 (K60) interacts with substrate. Substrate-binding residues include Y117, R121, and S125. FMN-binding positions include 134–135 (QS) and W180. 186-188 (RIH) is a binding site for substrate. R190 is a binding site for FMN.

Belongs to the pyridoxamine 5'-phosphate oxidase family. In terms of assembly, homodimer. It depends on FMN as a cofactor.

The catalysed reaction is pyridoxamine 5'-phosphate + O2 + H2O = pyridoxal 5'-phosphate + H2O2 + NH4(+). It catalyses the reaction pyridoxine 5'-phosphate + O2 = pyridoxal 5'-phosphate + H2O2. Its pathway is cofactor metabolism; pyridoxal 5'-phosphate salvage; pyridoxal 5'-phosphate from pyridoxamine 5'-phosphate: step 1/1. The protein operates within cofactor metabolism; pyridoxal 5'-phosphate salvage; pyridoxal 5'-phosphate from pyridoxine 5'-phosphate: step 1/1. Catalyzes the oxidation of either pyridoxine 5'-phosphate (PNP) or pyridoxamine 5'-phosphate (PMP) into pyridoxal 5'-phosphate (PLP). The chain is Pyridoxine/pyridoxamine 5'-phosphate oxidase from Pelagibacter ubique (strain HTCC1062).